Here is a 1077-residue protein sequence, read N- to C-terminus: Error-prone DNA polymerase (1077 aa).

This sequence belongs to the DNA polymerase type-C family. DnaE2 subfamily.

Its subcellular location is the cytoplasm. It catalyses the reaction DNA(n) + a 2'-deoxyribonucleoside 5'-triphosphate = DNA(n+1) + diphosphate. DNA polymerase involved in damage-induced mutagenesis and translesion synthesis (TLS). It is not the major replicative DNA polymerase. This Brucella melitensis biotype 1 (strain ATCC 23456 / CCUG 17765 / NCTC 10094 / 16M) protein is Error-prone DNA polymerase.